Here is a 159-residue protein sequence, read N- to C-terminus: Cyclic pyranopterin monophosphate synthase (159 aa).

Substrate contacts are provided by residues 76-78 (LCH) and 114-115 (ME). The active site involves Asp129.

Belongs to the MoaC family. As to quaternary structure, homohexamer; trimer of dimers.

It carries out the reaction (8S)-3',8-cyclo-7,8-dihydroguanosine 5'-triphosphate = cyclic pyranopterin phosphate + diphosphate. It participates in cofactor biosynthesis; molybdopterin biosynthesis. In terms of biological role, catalyzes the conversion of (8S)-3',8-cyclo-7,8-dihydroguanosine 5'-triphosphate to cyclic pyranopterin monophosphate (cPMP). This Clostridium botulinum (strain Alaska E43 / Type E3) protein is Cyclic pyranopterin monophosphate synthase.